A 165-amino-acid polypeptide reads, in one-letter code: 2-C-methyl-D-erythritol 2,4-cyclodiphosphate synthase (165 aa).

The a divalent metal cation site is built by Asp12 and His14. 4-CDP-2-C-methyl-D-erythritol 2-phosphate-binding positions include 12–14 (DVH) and 38–39 (HS). His46 contributes to the a divalent metal cation binding site. Residues 60–62 (DIG), 65–69 (FPDTD), Phe143, and Arg146 each bind 4-CDP-2-C-methyl-D-erythritol 2-phosphate.

The protein belongs to the IspF family. Homotrimer. It depends on a divalent metal cation as a cofactor.

It catalyses the reaction 4-CDP-2-C-methyl-D-erythritol 2-phosphate = 2-C-methyl-D-erythritol 2,4-cyclic diphosphate + CMP. It functions in the pathway isoprenoid biosynthesis; isopentenyl diphosphate biosynthesis via DXP pathway; isopentenyl diphosphate from 1-deoxy-D-xylulose 5-phosphate: step 4/6. Functionally, involved in the biosynthesis of isopentenyl diphosphate (IPP) and dimethylallyl diphosphate (DMAPP), two major building blocks of isoprenoid compounds. Catalyzes the conversion of 4-diphosphocytidyl-2-C-methyl-D-erythritol 2-phosphate (CDP-ME2P) to 2-C-methyl-D-erythritol 2,4-cyclodiphosphate (ME-CPP) with a corresponding release of cytidine 5-monophosphate (CMP). This chain is 2-C-methyl-D-erythritol 2,4-cyclodiphosphate synthase, found in Aromatoleum aromaticum (strain DSM 19018 / LMG 30748 / EbN1) (Azoarcus sp. (strain EbN1)).